The chain runs to 297 residues: Bifunctional protein FolD (297 aa).

NADP(+) is bound by residues 168-170 (GRG), threonine 195, and valine 236.

Belongs to the tetrahydrofolate dehydrogenase/cyclohydrolase family. In terms of assembly, homodimer.

It catalyses the reaction (6R)-5,10-methylene-5,6,7,8-tetrahydrofolate + NADP(+) = (6R)-5,10-methenyltetrahydrofolate + NADPH. The catalysed reaction is (6R)-5,10-methenyltetrahydrofolate + H2O = (6R)-10-formyltetrahydrofolate + H(+). It functions in the pathway one-carbon metabolism; tetrahydrofolate interconversion. Its function is as follows. Catalyzes the oxidation of 5,10-methylenetetrahydrofolate to 5,10-methenyltetrahydrofolate and then the hydrolysis of 5,10-methenyltetrahydrofolate to 10-formyltetrahydrofolate. This is Bifunctional protein FolD from Bifidobacterium animalis subsp. lactis (strain AD011).